A 113-amino-acid polypeptide reads, in one-letter code: Antimicrobial peptide microplusin (113 aa).

An N-terminal signal peptide occupies residues 1-19; it reads MKSLLVLALLAFGAVLVSA. 3 disulfides stabilise this stretch: Cys25/Cys71, Cys38/Cys99, and Cys60/Cys65.

Its subcellular location is the secreted. In terms of biological role, has bacteriostatic activity against Gram-positive bacteria, but not against Gram-negative bacteria. Has fungistatic activity against some but not all fungi. Binds and sequesters copper and iron ions. Copper-chelating activity is crucial for antimicrobial activity against M.luteus. The chain is Antimicrobial peptide microplusin from Argas monolakensis (Mono lake bird tick).